A 25-amino-acid chain; its full sequence is Putative cytochrome c4 (25 aa).

A disordered region spans residues 1-25 (QEDIEAGKQKSATCTACHGQEGNST). The heme site is built by C14 and C17.

Post-translationally, binds 2 heme groups per subunit.

It is found in the periplasm. Its function is as follows. Diheme, high potential cytochrome c believed to be an intermediate electron donor to terminal oxidation systems. This chain is Putative cytochrome c4, found in Aliivibrio fischeri (Vibrio fischeri).